Reading from the N-terminus, the 56-residue chain is Hydrophobic protein LTI6A (56 aa).

The next 2 helical transmembrane spans lie at 11–31 (IILA…CGIE) and 34–54 (ICLL…VWVI).

This sequence belongs to the UPF0057 (PMP3) family. As to expression, expressed in shoot of cold stressed seedlings.

Its subcellular location is the membrane. Plays a role in the regulation of membrane potential. Could mediate a proton leak. This is Hydrophobic protein LTI6A (LTI6A) from Oryza sativa subsp. japonica (Rice).